We begin with the raw amino-acid sequence, 454 residues long: Phosphoglucosamine mutase (454 aa).

The active-site Phosphoserine intermediate is S101. Mg(2+) contacts are provided by S101, D243, D245, and D247. Position 101 is a phosphoserine (S101).

The protein belongs to the phosphohexose mutase family. Mg(2+) serves as cofactor. In terms of processing, activated by phosphorylation.

The catalysed reaction is alpha-D-glucosamine 1-phosphate = D-glucosamine 6-phosphate. Functionally, catalyzes the conversion of glucosamine-6-phosphate to glucosamine-1-phosphate. This Geotalea daltonii (strain DSM 22248 / JCM 15807 / FRC-32) (Geobacter daltonii) protein is Phosphoglucosamine mutase.